The primary structure comprises 1006 residues: Transmembrane channel-like protein 5 (1006 aa).

The segment at 1 to 289 (MSAYYRNNWS…DDPVGSLWGE (289 aa)) is disordered. Topologically, residues 1–458 (MSAYYRNNWS…YFNFLRWLLK (458 aa)) are extracellular. Composition is skewed to polar residues over residues 20–30 (SGSQNRTQGYL), 50–59 (TRSNPYSVAS), and 76–101 (RSLS…SPDH). Residues 138 to 149 (AGSSSSGNYAGS) show a composition bias toward low complexity. Basic and acidic residues predominate over residues 239–250 (REPDYSDAENGH). Residues 459 to 479 (FNIFSFILNFSFIIIPQFTVA) traverse the membrane as a helical segment. At 480-485 (KKNTLQ) the chain is on the cytoplasmic side. A helical transmembrane segment spans residues 486 to 508 (FTGLEFFTGVGYFRDTVMYYGFY). Residues 509-525 (TNSTIQHGNSGASYNMQ) are Extracellular-facing. A helical transmembrane segment spans residues 526-546 (LAYIFTIGACLTTCFFSLLFS). The Cytoplasmic segment spans residues 547–619 (MAKYFRNNFI…NQLLTRFSAY (73 aa)). Residues 620 to 640 (MVAWVVSTGVAIACCAAVYYL) form a helical membrane-spanning segment. The Extracellular portion of the chain corresponds to 641 to 654 (AEYNLEFLKTHSNP). A helical transmembrane segment spans residues 655–675 (GAVLLLPFVVSCINLAVPCIY). Topologically, residues 676 to 698 (SMFRLVERYEMPRHEVYVLLIRN) are cytoplasmic. A helical transmembrane segment spans residues 699–719 (IFLKISIIGILCYYWLNTVAL). Over 720-732 (SGEECWETLIGQD) the chain is Extracellular. The chain crosses the membrane as a helical span at residues 733–753 (IYRLLLMDFVFSLVNSFLGEF). Topologically, residues 754-786 (LRRIIGMQLITSLGLQEFDIARNVLELIYAQTL) are cytoplasmic. A helical transmembrane segment spans residues 787–807 (VWIGIFFCPLLPFIQMIMLFI). Residues 808–835 (MFYSKNISLMMNFQPPSKAWRASQMMTF) lie on the Extracellular side of the membrane. Residues 836–856 (FIFLLFFPSFTGVLCTLAITI) traverse the membrane as a helical segment. At 857–900 (WRLKPSADCGPFRGLPLFIHSIYSWIDTLSTRPGYLWVVWIYRN) the chain is on the cytoplasmic side. Residues 901 to 921 (LIGSVHFFFILTLIVLIITYL) traverse the membrane as a helical segment. Over 922–1006 (YWQITEGRKI…RSVQEGNPRA (85 aa)) the chain is Extracellular.

It belongs to the TMC family.

The protein localises to the membrane. In terms of biological role, probable component of an ion channel. Molecular function hasn't been characterized yet. This chain is Transmembrane channel-like protein 5, found in Homo sapiens (Human).